The sequence spans 358 residues: Heme A synthase (358 aa).

8 helical membrane-spanning segments follow: residues 22–42, 107–127, 133–153, 172–192, 208–228, 269–289, 302–322, and 324–344; these read IQVW…VGGA, VLGR…WVTK, IFLQ…IGWW, LAIH…LSRG, FAGW…LVAG, FVHR…ALYV, AIFL…TLLH, and VPIS…CFSV. Histidine 271 is a binding site for heme. Histidine 332 serves as a coordination point for heme.

Belongs to the COX15/CtaA family. Type 2 subfamily. As to quaternary structure, interacts with CtaB. The cofactor is heme b.

The protein resides in the cell membrane. The catalysed reaction is Fe(II)-heme o + 2 A + H2O = Fe(II)-heme a + 2 AH2. The protein operates within porphyrin-containing compound metabolism; heme A biosynthesis; heme A from heme O: step 1/1. Functionally, catalyzes the conversion of heme O to heme A by two successive hydroxylations of the methyl group at C8. The first hydroxylation forms heme I, the second hydroxylation results in an unstable dihydroxymethyl group, which spontaneously dehydrates, resulting in the formyl group of heme A. The protein is Heme A synthase of Bartonella bacilliformis (strain ATCC 35685 / KC583 / Herrer 020/F12,63).